We begin with the raw amino-acid sequence, 561 residues long: MRHCINCCVQLFPEDTHKQQVACQGGPHHSHQACPTCKGENKILFRVDSKQMNLLAVLEVRTEGNENWGGFLRFRKGKRCSLVFGLIIMTLVMASYILSGAHQELLISSPFHYGGFPSNPSVMDGENPSDVKEHHYQPSVNNISYVKDYPSIKLIIDSIAARIEFTTRQLPDLQDLKRQELHMFSVIPSKFLPTSKSPCWYEEFSGRNTTDPYLTNSYVLYSKRFRSTFDALRKVFWGHLSHVQGKHFRLRCLPHFYIIGQPKCGTTDLYDRLRLHPEVKFSAIKEPHWWTRKRFGIVRLRDGLRDRYPVEDYLDLFDLAAHQIHQGLQAASAEQPSKMNKIIIGEASASTMWDNNAWTFFYDNSTDGEPPFLTQDFIHAFQPEAKLIVMLRDPVERLYSDYLYFASSNKSADDFHEKVTEALQLFENCMLDYSLRACVYNNTLNNAMPVRLQVGLYAVYLLDWLTVFSKEQFLILRLEDHASNVKYTMHKVFQFLNLGPLSEKQEALMTKSPASNTRRPEDRSLGPMWPITQKILREFYGPFNTRLAQVLDDEAFAWKTT.

Residues 1–80 lie on the Cytoplasmic side of the membrane; that stretch reads MRHCINCCVQ…FLRFRKGKRC (80 aa). A helical; Signal-anchor for type II membrane protein transmembrane segment spans residues 81–101; the sequence is SLVFGLIIMTLVMASYILSGA. Residues 102–561 are Lumenal-facing; sequence HQELLISSPF…DDEAFAWKTT (460 aa). 3'-phosphoadenylyl sulfate is bound at residue 263-267; sequence KCGTT. Asn-364 is a glycosylation site (N-linked (GlcNAc...) asparagine). The 3'-phosphoadenylyl sulfate site is built by Arg-392 and Ser-400.

This sequence belongs to the sulfotransferase 1 family. As to quaternary structure, homodimer; disulfide-linked (Potential). The relevance of homodimerization is however unsure. May interact with phosphorylated proteins in resting B-cells, including HCK. It depends on a divalent metal cation as a cofactor. Requires glutathione as cofactor. Glycosylated.

It localises to the golgi apparatus membrane. The enzyme catalyses dermatan 4'-sulfate + n 3'-phosphoadenylyl sulfate = dermatan 4',6'-bissulfate + n adenosine 3',5'-bisphosphate + n H(+). The catalysed reaction is chondroitin 4'-sulfate + n 3'-phosphoadenylyl sulfate = chondroitin 4',6'-bissulfate + n adenosine 3',5'-bisphosphate + n H(+). Inhibited by phenyl beta-GalNAc(4,6-SO(4)). Sulfotransferase that transfers sulfate from 3'-phosphoadenosine 5'-phosphosulfate (PAPS) to the C-6 hydroxyl group of the GalNAc 4-sulfate residue of chondroitin sulfate A and forms chondroitin sulfate E containing GlcA-GalNAc(4,6-SO(4)) repeating units. It also transfers sulfate to a unique non-reducing terminal sequence, GalNAc(4SO4)-GlcA(2SO4)-GalNAc(6SO4), to yield a highly sulfated structure similar to the structure found in thrombomodulin chondroitin sulfate. May also act as a B-cell receptor involved in BCR ligation-mediated early activation that mediate regulatory signals key to B-cell development and/or regulation of B-cell-specific RAG expression; however such results are unclear in vivo. The chain is Carbohydrate sulfotransferase 15 (Chst15) from Mus musculus (Mouse).